Consider the following 180-residue polypeptide: Phosphoribosylaminoimidazole carboxylase (180 aa).

Positions 35, 38, 62, 65, 89, and 91 each coordinate substrate.

Belongs to the AIR carboxylase family. Class II subfamily.

It carries out the reaction 5-amino-1-(5-phospho-D-ribosyl)imidazole-4-carboxylate + H(+) = 5-amino-1-(5-phospho-beta-D-ribosyl)imidazole + CO2. Its pathway is purine metabolism; IMP biosynthesis via de novo pathway; 5-amino-1-(5-phospho-D-ribosyl)imidazole-4-carboxylate from 5-amino-1-(5-phospho-D-ribosyl)imidazole (carboxylase route): step 1/1. In terms of biological role, catalyzes the reversible conversion of 5-aminoimidazole ribonucleotide (AIR) and CO(2) to 4-carboxy-5-aminoimidazole ribonucleotide (CAIR). The sequence is that of Phosphoribosylaminoimidazole carboxylase from Archaeoglobus fulgidus (strain ATCC 49558 / DSM 4304 / JCM 9628 / NBRC 100126 / VC-16).